A 105-amino-acid polypeptide reads, in one-letter code: ATP synthase subunit c (105 aa).

3 helical membrane passes run 3–23, 32–52, and 78–98; these read FLAL…GGMD, SILG…IGMG, and VAMA…IIAI.

Belongs to the ATPase C chain family. As to quaternary structure, F-type ATPases have 2 components, F(1) - the catalytic core - and F(0) - the membrane proton channel. F(1) has five subunits: alpha(3), beta(3), gamma(1), delta(1), epsilon(1). F(0) has three main subunits: a(1), b(2) and c(10-14). The alpha and beta chains form an alternating ring which encloses part of the gamma chain. F(1) is attached to F(0) by a central stalk formed by the gamma and epsilon chains, while a peripheral stalk is formed by the delta and b chains.

It localises to the cell inner membrane. F(1)F(0) ATP synthase produces ATP from ADP in the presence of a proton or sodium gradient. F-type ATPases consist of two structural domains, F(1) containing the extramembraneous catalytic core and F(0) containing the membrane proton channel, linked together by a central stalk and a peripheral stalk. During catalysis, ATP synthesis in the catalytic domain of F(1) is coupled via a rotary mechanism of the central stalk subunits to proton translocation. In terms of biological role, key component of the F(0) channel; it plays a direct role in translocation across the membrane. A homomeric c-ring of between 10-14 subunits forms the central stalk rotor element with the F(1) delta and epsilon subunits. The protein is ATP synthase subunit c of Helicobacter acinonychis (strain Sheeba).